The sequence spans 161 residues: Nucleotide-binding protein Glov_3198 (161 aa).

It belongs to the YajQ family.

Nucleotide-binding protein. This chain is Nucleotide-binding protein Glov_3198, found in Trichlorobacter lovleyi (strain ATCC BAA-1151 / DSM 17278 / SZ) (Geobacter lovleyi).